A 272-amino-acid chain; its full sequence is Transcription factor GAL1 (272 aa).

Polar residues predominate over residues 1-10 (MAGKNMSSRL). Disordered regions lie at residues 1 to 49 (MAGK…SPET), 102 to 215 (YGAI…SRDI), and 246 to 272 (KGHLQKDCPDRKQRRGDKRKSGGAMDY). 2 stretches are compositionally biased toward acidic residues: residues 113-122 (ESDDDQDEEQ) and 152-174 (SEQDSDASSDSDSDDDEDLDEAE). Residues 175–215 (LLIKAERKEAAAKLRAERKAQRKADEVKSKQMAERRRSRDI) are compositionally biased toward basic and acidic residues. Residues 240–255 (CHVCGQKGHLQKDCPD) form a CCHC-type zinc finger.

It localises to the nucleus. Functionally, transcription factor; part of the gene cluster that mediates the biosynthesis of liamocins, glycolipids (also called heavy oils) composed of a single mannitol or arabitol headgroup linked to either three, four or even six 3,5-dihydroxydecanoic ester tail-groups. Positively regulates the expression of PKS1 and EST1 that mediate the biosynthesis of liamocins. This Aureobasidium melanogenum (Aureobasidium pullulans var. melanogenum) protein is Transcription factor GAL1.